The primary structure comprises 629 residues: tRNA uridine 5-carboxymethylaminomethyl modification enzyme MnmG (629 aa).

FAD contacts are provided by residues 13-18, valine 125, and serine 180; that span reads GGGHAG. 273 to 287 contributes to the NAD(+) binding site; sequence GPRYCPSIEDKVMRF. Glutamine 370 serves as a coordination point for FAD.

This sequence belongs to the MnmG family. In terms of assembly, homodimer. Heterotetramer of two MnmE and two MnmG subunits. The cofactor is FAD.

Its subcellular location is the cytoplasm. Functionally, NAD-binding protein involved in the addition of a carboxymethylaminomethyl (cmnm) group at the wobble position (U34) of certain tRNAs, forming tRNA-cmnm(5)s(2)U34. This chain is tRNA uridine 5-carboxymethylaminomethyl modification enzyme MnmG, found in Escherichia coli (strain SMS-3-5 / SECEC).